Reading from the N-terminus, the 254-residue chain is 5'/3'-nucleotidase SurE (254 aa).

A divalent metal cation contacts are provided by D9, D10, S40, and N93.

Belongs to the SurE nucleotidase family. A divalent metal cation serves as cofactor.

It localises to the cytoplasm. The catalysed reaction is a ribonucleoside 5'-phosphate + H2O = a ribonucleoside + phosphate. It carries out the reaction a ribonucleoside 3'-phosphate + H2O = a ribonucleoside + phosphate. It catalyses the reaction [phosphate](n) + H2O = [phosphate](n-1) + phosphate + H(+). Nucleotidase with a broad substrate specificity as it can dephosphorylate various ribo- and deoxyribonucleoside 5'-monophosphates and ribonucleoside 3'-monophosphates with highest affinity to 3'-AMP. Also hydrolyzes polyphosphate (exopolyphosphatase activity) with the preference for short-chain-length substrates (P20-25). Might be involved in the regulation of dNTP and NTP pools, and in the turnover of 3'-mononucleotides produced by numerous intracellular RNases (T1, T2, and F) during the degradation of various RNAs. The polypeptide is 5'/3'-nucleotidase SurE (Yersinia pseudotuberculosis serotype O:1b (strain IP 31758)).